The following is a 343-amino-acid chain: uncharacterized protein (343 aa).

The next 11 helical transmembrane spans lie at 13–33, 44–64, 71–91, 121–141, 148–168, 177–197, 203–223, 244–264, 269–289, 296–316, and 320–340; these read VILY…SMCG, LWGY…ATLD, MHPV…LFFI, ILLL…LTGL, NASL…YLIF, FLGI…GDFS, VAVT…LDTV, VGGF…ELPL, YALG…YIAI, MVGA…FIIL, and FSIM…ILYW. EamA domains follow at residues 55–192 and 216–340; these read IFFG…YLLT and FFWS…ILYW.

The protein belongs to the EamA transporter family.

It localises to the cell membrane. This is an uncharacterized protein from Methanothermobacter thermautotrophicus (strain ATCC 29096 / DSM 1053 / JCM 10044 / NBRC 100330 / Delta H) (Methanobacterium thermoautotrophicum).